A 117-amino-acid polypeptide reads, in one-letter code: MITKQSSNVLRKKRHLRLRKIVSGTSQRPRLNVFRSNKFLYVQIIDDTQQTTLCSANSKESNVLGSNIKAAEAVGALIAKKALAQGIKNVVFDRSGYLYHGKIKALADACRKSGLQF.

It belongs to the universal ribosomal protein uL18 family. Part of the 50S ribosomal subunit; part of the 5S rRNA/L5/L18/L25 subcomplex. Contacts the 5S and 23S rRNAs.

Functionally, this is one of the proteins that bind and probably mediate the attachment of the 5S RNA into the large ribosomal subunit, where it forms part of the central protuberance. This Onion yellows phytoplasma (strain OY-M) protein is Large ribosomal subunit protein uL18.